A 440-amino-acid chain; its full sequence is Streptokinase A (440 aa).

Positions 1–26 are cleaved as a signal peptide; it reads MKNYLSIGVIALLFALTFGTVKSVQA.

This protein is not a protease, but it activates plasminogen by complexing with it. As a potential virulence factor, it is thought to prevent the formation of effective fibrin barriers around the site of infection, thereby contributing to the invasiveness of the cells. The chain is Streptokinase A (ska) from Streptococcus pyogenes serotype M1.